The sequence spans 293 residues: Protease HtpX (293 aa).

A run of 2 helical transmembrane segments spans residues 4–24 (IALFLLTNLAVMLVFGLVLSL) and 34–54 (GLMIMAGLFGFGGAFVSLLMS). Residue H139 participates in Zn(2+) binding. E140 is an active-site residue. Residue H143 coordinates Zn(2+). A run of 2 helical transmembrane segments spans residues 158–178 (VVNTFVIFISRLIAQIAAGFL) and 193–213 (MVYFAVSMVLELVFGILASII). A Zn(2+)-binding site is contributed by E222.

Belongs to the peptidase M48B family. Zn(2+) is required as a cofactor.

The protein localises to the cell inner membrane. In Yersinia pseudotuberculosis serotype O:1b (strain IP 31758), this protein is Protease HtpX.